The primary structure comprises 412 residues: Light-independent protochlorophyllide reductase subunit N (412 aa).

[4Fe-4S] cluster contacts are provided by cysteine 16, cysteine 41, and cysteine 102.

Belongs to the BchN/ChlN family. Protochlorophyllide reductase is composed of three subunits; ChlL, ChlN and ChlB. Forms a heterotetramer of two ChlB and two ChlN subunits. It depends on [4Fe-4S] cluster as a cofactor.

It carries out the reaction chlorophyllide a + oxidized 2[4Fe-4S]-[ferredoxin] + 2 ADP + 2 phosphate = protochlorophyllide a + reduced 2[4Fe-4S]-[ferredoxin] + 2 ATP + 2 H2O. It functions in the pathway porphyrin-containing compound metabolism; chlorophyll biosynthesis (light-independent). In terms of biological role, component of the dark-operative protochlorophyllide reductase (DPOR) that uses Mg-ATP and reduced ferredoxin to reduce ring D of protochlorophyllide (Pchlide) to form chlorophyllide a (Chlide). This reaction is light-independent. The NB-protein (ChlN-ChlB) is the catalytic component of the complex. This is Light-independent protochlorophyllide reductase subunit N from Synechococcus sp. (strain RCC307).